The primary structure comprises 354 residues: Biotin synthase (354 aa).

One can recognise a Radical SAM core domain in the interval 41-265 (NEVQISRLLS…IMPHSRVRLS (225 aa)). [4Fe-4S] cluster-binding residues include cysteine 56, cysteine 60, and cysteine 63. 4 residues coordinate [2Fe-2S] cluster: cysteine 100, cysteine 131, cysteine 191, and arginine 263.

It belongs to the radical SAM superfamily. Biotin synthase family. Homodimer. It depends on [4Fe-4S] cluster as a cofactor. [2Fe-2S] cluster serves as cofactor.

It catalyses the reaction (4R,5S)-dethiobiotin + (sulfur carrier)-SH + 2 reduced [2Fe-2S]-[ferredoxin] + 2 S-adenosyl-L-methionine = (sulfur carrier)-H + biotin + 2 5'-deoxyadenosine + 2 L-methionine + 2 oxidized [2Fe-2S]-[ferredoxin]. It participates in cofactor biosynthesis; biotin biosynthesis; biotin from 7,8-diaminononanoate: step 2/2. Its function is as follows. Catalyzes the conversion of dethiobiotin (DTB) to biotin by the insertion of a sulfur atom into dethiobiotin via a radical-based mechanism. The polypeptide is Biotin synthase (Shewanella sediminis (strain HAW-EB3)).